The following is an 889-amino-acid chain: DNA gyrase subunit A (889 aa).

A Topo IIA-type catalytic domain is found at Leu35–Leu501. Catalysis depends on Tyr123, which acts as the O-(5'-phospho-DNA)-tyrosine intermediate. The GyrA-box signature appears at Gln528–Gly534. A disordered region spans residues Lys811 to Glu889. The span at Asp813–Gln823 shows a compositional bias: acidic residues. The segment covering Asp863–Arg875 has biased composition (basic and acidic residues). Residues Val876–Glu889 show a composition bias toward acidic residues.

This sequence belongs to the type II topoisomerase GyrA/ParC subunit family. As to quaternary structure, heterotetramer, composed of two GyrA and two GyrB chains. In the heterotetramer, GyrA contains the active site tyrosine that forms a transient covalent intermediate with DNA, while GyrB binds cofactors and catalyzes ATP hydrolysis.

The protein resides in the cytoplasm. It carries out the reaction ATP-dependent breakage, passage and rejoining of double-stranded DNA.. Its function is as follows. A type II topoisomerase that negatively supercoils closed circular double-stranded (ds) DNA in an ATP-dependent manner to modulate DNA topology and maintain chromosomes in an underwound state. Negative supercoiling favors strand separation, and DNA replication, transcription, recombination and repair, all of which involve strand separation. Also able to catalyze the interconversion of other topological isomers of dsDNA rings, including catenanes and knotted rings. Type II topoisomerases break and join 2 DNA strands simultaneously in an ATP-dependent manner. The chain is DNA gyrase subunit A from Staphylococcus aureus (strain Mu50 / ATCC 700699).